A 279-amino-acid polypeptide reads, in one-letter code: Lipid phosphate phosphatase epsilon 1, chloroplastic (279 aa).

A chloroplast-targeting transit peptide spans 1–88 (MAASSSLLLL…SFINNSSEIR (88 aa)). Transmembrane regions (helical) follow at residues 126–142 (LWAVIGSISNSALSVVL), 164–184 (SHAQSISFISVFAVLSVMEWL), 185–205 (GTNGVSLFLSGLILALGSYFI), 219–239 (VVVGAIVGSLFCILWYTMWNS), and 255–275 (VFLFAATFALAFAAYVVLNWF).

Belongs to the PA-phosphatase related phosphoesterase family. As to expression, expressed in root tips, root branch points, cotyledons and leaves.

It localises to the plastid. It is found in the chloroplast inner membrane. Inhibited by Mg(2+). Its function is as follows. Exhibits phosphatidate phosphatase (PAP) activity in vitro. May play a secondary role as PAP in plastids. The protein is Lipid phosphate phosphatase epsilon 1, chloroplastic (LPPE1) of Arabidopsis thaliana (Mouse-ear cress).